A 343-amino-acid chain; its full sequence is Tetraacyldisaccharide 4'-kinase (343 aa).

61–68 (GVGGNGKT) serves as a coordination point for ATP.

Belongs to the LpxK family.

The catalysed reaction is a lipid A disaccharide + ATP = a lipid IVA + ADP + H(+). It functions in the pathway glycolipid biosynthesis; lipid IV(A) biosynthesis; lipid IV(A) from (3R)-3-hydroxytetradecanoyl-[acyl-carrier-protein] and UDP-N-acetyl-alpha-D-glucosamine: step 6/6. Transfers the gamma-phosphate of ATP to the 4'-position of a tetraacyldisaccharide 1-phosphate intermediate (termed DS-1-P) to form tetraacyldisaccharide 1,4'-bis-phosphate (lipid IVA). In Colwellia psychrerythraea (strain 34H / ATCC BAA-681) (Vibrio psychroerythus), this protein is Tetraacyldisaccharide 4'-kinase.